Here is a 210-residue protein sequence, read N- to C-terminus: Ribonuclease HII (210 aa).

The RNase H type-2 domain maps to 18 to 207; that stretch reads RFVAGVDEVG…VHKILCKEET (190 aa). A divalent metal cation-binding residues include D24, E25, and D115.

It belongs to the RNase HII family. Mn(2+) serves as cofactor. Requires Mg(2+) as cofactor.

It localises to the cytoplasm. The enzyme catalyses Endonucleolytic cleavage to 5'-phosphomonoester.. Functionally, endonuclease that specifically degrades the RNA of RNA-DNA hybrids. The protein is Ribonuclease HII of Paracoccus denitrificans (strain Pd 1222).